The following is a 166-amino-acid chain: Small ribosomal subunit protein uS5 (166 aa).

The S5 DRBM domain maps to 12–75 (YIEKLVQVNR…EAARRNMIQV (64 aa)).

It belongs to the universal ribosomal protein uS5 family. In terms of assembly, part of the 30S ribosomal subunit. Contacts proteins S4 and S8.

Functionally, with S4 and S12 plays an important role in translational accuracy. Its function is as follows. Located at the back of the 30S subunit body where it stabilizes the conformation of the head with respect to the body. The polypeptide is Small ribosomal subunit protein uS5 (Pseudomonas fluorescens (strain ATCC BAA-477 / NRRL B-23932 / Pf-5)).